Reading from the N-terminus, the 401-residue chain is Argininosuccinate synthase (401 aa).

9–17 (AYSGGLDTS) lines the ATP pocket. Residue tyrosine 86 coordinates L-citrulline. Glycine 116 lines the ATP pocket. Residues threonine 118, asparagine 122, and aspartate 123 each coordinate L-aspartate. Asparagine 122 is a binding site for L-citrulline. Arginine 126, serine 174, serine 183, glutamate 259, and tyrosine 271 together coordinate L-citrulline.

This sequence belongs to the argininosuccinate synthase family. Type 1 subfamily. Homotetramer.

It is found in the cytoplasm. The catalysed reaction is L-citrulline + L-aspartate + ATP = 2-(N(omega)-L-arginino)succinate + AMP + diphosphate + H(+). The protein operates within amino-acid biosynthesis; L-arginine biosynthesis; L-arginine from L-ornithine and carbamoyl phosphate: step 2/3. This chain is Argininosuccinate synthase, found in Bacillus cereus (strain Q1).